An 855-amino-acid polypeptide reads, in one-letter code: Cytosolic phospholipase A2 zeta (855 aa).

The C2 domain occupies 27 to 145 (EKSEPQWKHR…QLGQPCTKNF (119 aa)). The Ca(2+) site is built by aspartate 60, aspartate 66, aspartate 116, aspartate 118, and aspartate 123. The region spanning 304 to 855 (MSSSGDLDLR…RRQAGGRVGG (552 aa)) is the PLA2c domain. Serine 393 functions as the Nucleophile in the catalytic mechanism. Aspartate 685 acts as the Proton acceptor in catalysis.

The cofactor is Ca(2+). As to expression, strongly expressed in thyroid, expressed at intermediate level in stomach and at very low level in large intestine and prostate.

Its subcellular location is the cytoplasm. The protein localises to the cytosol. It localises to the cell membrane. It is found in the mitochondrion. It carries out the reaction a 1,2-diacyl-sn-glycero-3-phosphocholine + H2O = a 1-acyl-sn-glycero-3-phosphocholine + a fatty acid + H(+). It catalyses the reaction a 1-O-alkyl-2-acyl-sn-glycero-3-phosphocholine + H2O = a 1-O-alkyl-sn-glycero-3-phosphocholine + a fatty acid + H(+). The enzyme catalyses 1-hexadecanoyl-2-(9Z-octadecenoyl)-sn-glycero-3-phosphocholine + H2O = 2-(9Z-octadecenoyl)-sn-glycero-3-phosphocholine + hexadecanoate + H(+). The catalysed reaction is 1-hexadecanoyl-2-(9Z,12Z-octadecadienoyl)-sn-glycero-3-phosphocholine + H2O = (9Z,12Z)-octadecadienoate + 1-hexadecanoyl-sn-glycero-3-phosphocholine + H(+). It carries out the reaction 1-hexadecanoyl-2-(5Z,8Z,11Z,14Z-eicosatetraenoyl)-sn-glycero-3-phosphocholine + H2O = 1-hexadecanoyl-sn-glycero-3-phosphocholine + (5Z,8Z,11Z,14Z)-eicosatetraenoate + H(+). It catalyses the reaction 1-hexadecanoyl-2-(9Z,12Z-octadecadienoyl)-sn-glycero-3-phosphoethanolamine + H2O = 1-hexadecanoyl-sn-glycero-3-phosphoethanolamine + (9Z,12Z)-octadecadienoate + H(+). The enzyme catalyses 1-hexadecanoyl-2-(5Z,8Z,11Z,14Z-eicosatetraenoyl)-sn-glycero-3-phosphoethanolamine + H2O = 1-hexadecanoyl-sn-glycero-3-phosphoethanolamine + (5Z,8Z,11Z,14Z)-eicosatetraenoate + H(+). The catalysed reaction is 1-(5Z,8Z,11Z,14Z-eicosatetraenoyl)-2-O-hexadecyl-sn-glycero-3-phosphocholine + H2O = 2-O-hexadecyl-sn-glycero-3-phosphocholine + (5Z,8Z,11Z,14Z)-eicosatetraenoate + H(+). It carries out the reaction 1-O-hexadecyl-2-(5Z,8Z,11Z,14Z)-eicosatetraenoyl-sn-glycero-3-phosphocholine + H2O = 1-O-hexadecyl-sn-glycero-3-phosphocholine + (5Z,8Z,11Z,14Z)-eicosatetraenoate + H(+). It catalyses the reaction 1-hexadecanoyl-sn-glycero-3-phosphocholine + H2O = sn-glycerol 3-phosphocholine + hexadecanoate + H(+). With respect to regulation, stimulated by cytosolic Ca(2+). In terms of biological role, has calcium-dependent phospholipase and lysophospholipase activities with a potential role in membrane lipid remodeling and biosynthesis of lipid mediators. Preferentially hydrolyzes the ester bond of the fatty acyl group attached at sn-2 position of phospholipids (phospholipase A2 activity). Selectively hydrolyzes sn-2 arachidonoyl group from membrane phospholipids, providing the precursor for eicosanoid biosynthesis. In myocardial mitochondria, plays a major role in arachidonate release that is metabolically channeled to the formation of cardioprotective eicosanoids, epoxyeicosatrienoates (EETs). This Mus musculus (Mouse) protein is Cytosolic phospholipase A2 zeta (Pla2g4f).